Consider the following 118-residue polypeptide: Small ribosomal subunit protein uS13 (118 aa).

Residues 94–118 (SLPVRGQRTKTNARTRKGPRRPIKR) are disordered.

This sequence belongs to the universal ribosomal protein uS13 family. As to quaternary structure, part of the 30S ribosomal subunit. Forms a loose heterodimer with protein S19. Forms two bridges to the 50S subunit in the 70S ribosome.

Functionally, located at the top of the head of the 30S subunit, it contacts several helices of the 16S rRNA. In the 70S ribosome it contacts the 23S rRNA (bridge B1a) and protein L5 of the 50S subunit (bridge B1b), connecting the 2 subunits; these bridges are implicated in subunit movement. Contacts the tRNAs in the A and P-sites. This is Small ribosomal subunit protein uS13 from Dichelobacter nodosus (strain VCS1703A).